A 151-amino-acid chain; its full sequence is UPF0178 protein PFLU_5917 (151 aa).

This sequence belongs to the UPF0178 family.

This Pseudomonas fluorescens (strain SBW25) protein is UPF0178 protein PFLU_5917.